The sequence spans 282 residues: Gap junction Cx32.7 protein (282 aa).

Over 2–13 the chain is Cytoplasmic; it reads GEWDLLGRLLDK. The helical transmembrane segment at 14-36 threads the bilayer; sequence VQSHSTVIGKVWLTVLFVFRILV. Topologically, residues 37-76 are extracellular; sequence LRTGADRVWGDEQSDFVCNTQQPGCENVCYDLAFPISHVR. The chain crosses the membrane as a helical span at residues 77-99; it reads FWFLQIIAVATPKLLYLGHVLHV. Topologically, residues 100-148 are cytoplasmic; that stretch reads IHAEKKMKERMKKQAELDDQTNLFLRKAYKVPKYTKSSGKISIRGRLLR. The chain crosses the membrane as a helical span at residues 149–171; the sequence is SYVYHLVAKIILEVLFIVGQYFL. At 172-203 the chain is on the extracellular side; the sequence is YGFTLDTRYVCTRFPCPHKVDCFLSRPTEKSV. A helical membrane pass occupies residues 204–226; it reads IIWFMLVAAFVSLFLSLVELFYL. Residues 227-282 are Cytoplasmic-facing; that stretch reads CVKAAKECMARRQDYTVTPVTPPLLARKSFKSHKEVFQNCVNEPASPENNMEEVHI.

This sequence belongs to the connexin family. Alpha-type (group II) subfamily. As to quaternary structure, a connexon is composed of a hexamer of connexins. In terms of tissue distribution, expressed equally in incompetent and competent ovaries.

It is found in the cell membrane. The protein localises to the cell junction. The protein resides in the gap junction. Functionally, one gap junction consists of a cluster of closely packed pairs of transmembrane channels, the connexons, through which materials of low MW diffuse from one cell to a neighboring cell. The sequence is that of Gap junction Cx32.7 protein from Micropogonias undulatus (Atlantic croaker).